Here is a 603-residue protein sequence, read N- to C-terminus: Methylenetetrahydrofolate reductase 1 (603 aa).

Glu21 acts as the Proton donor/acceptor in catalysis. Residues 21-26 (EFFPPK) and 53-54 (TW) contribute to the NAD(+) site. FAD is bound by residues 53–54 (TW), His82, 112–114 (RGD), 130–131 (YA), Tyr153, and Lys173. A substrate-binding site is contributed by Asp114. Substrate is bound by residues Gln184 and Tyr276. Ser355 carries the post-translational modification Phosphoserine.

Belongs to the methylenetetrahydrofolate reductase family. Requires FAD as cofactor.

The catalysed reaction is (6S)-5-methyl-5,6,7,8-tetrahydrofolate + NADP(+) = (6R)-5,10-methylene-5,6,7,8-tetrahydrofolate + NADPH + H(+). It carries out the reaction (6S)-5-methyl-5,6,7,8-tetrahydrofolate + NAD(+) = (6R)-5,10-methylene-5,6,7,8-tetrahydrofolate + NADH + H(+). It functions in the pathway one-carbon metabolism; tetrahydrofolate interconversion. Functionally, major methylenetetrahydrofolate reductase required to generate the methyl groups necessary for methionine synthetase to convert homocysteine to methionine. Performs 80 to 85 percent of the total methylenetetrahydrofolate reductase activity of the cells. The protein is Methylenetetrahydrofolate reductase 1 (met9) of Schizosaccharomyces pombe (strain 972 / ATCC 24843) (Fission yeast).